A 423-amino-acid chain; its full sequence is Enolase (423 aa).

Glutamine 163 is a binding site for (2R)-2-phosphoglycerate. The active-site Proton donor is the glutamate 205. Mg(2+)-binding residues include aspartate 242, glutamate 285, and aspartate 312. Residues lysine 337, arginine 366, serine 367, and lysine 388 each contribute to the (2R)-2-phosphoglycerate site. Lysine 337 acts as the Proton acceptor in catalysis.

It belongs to the enolase family. Mg(2+) serves as cofactor.

Its subcellular location is the cytoplasm. It localises to the secreted. The protein resides in the cell surface. It catalyses the reaction (2R)-2-phosphoglycerate = phosphoenolpyruvate + H2O. It participates in carbohydrate degradation; glycolysis; pyruvate from D-glyceraldehyde 3-phosphate: step 4/5. Functionally, catalyzes the reversible conversion of 2-phosphoglycerate (2-PG) into phosphoenolpyruvate (PEP). It is essential for the degradation of carbohydrates via glycolysis. This is Enolase from Desulforapulum autotrophicum (strain ATCC 43914 / DSM 3382 / VKM B-1955 / HRM2) (Desulfobacterium autotrophicum).